Consider the following 247-residue polypeptide: HTH-type transcriptional regulator SarU (247 aa).

2 DNA-binding regions (H-T-H motif) span residues 53-76 and 178-201; these read LKEI…SLSK and LKDL…RLNN.

Belongs to the SarA family.

The protein localises to the cytoplasm. Its function is as follows. Positive regulator of RNAII and RNAIII in a cell density-dependent manner. It can contribute to the expression of virulence genes controlled by agr. May also regulate target genes via an agr-independent pathway. In Staphylococcus aureus (strain NCTC 8325 / PS 47), this protein is HTH-type transcriptional regulator SarU (sarU).